Consider the following 422-residue polypeptide: uncharacterized protein (422 aa).

A run of 12 helical transmembrane segments spans residues 23–43 (IVKISGDMFAFNSILWFLIYD), 47–67 (AIGTALLIAVTFLPEAVLAPV), 90–110 (AIVLIIPLCHFAGFSPLWFVM), 112–132 (LMIVHSATGAAYNPASIALIP), 151–171 (AQIVRLGAVTLCGAFLTFISP), 172–192 (SYTMLIALVLYLVSGFLVLFI), 228–248 (ILYPLAIYCIFMNFAAAPWEA), 263–283 (IVYSLLKATTAAGAFLLGFVL), 291–308 (YGLLFVTAGIIEGFAFFI), 318–340 (VFFAAFTFGAAVSAVNVPEYTII), 352–372 (VYAVIHMISNISIPAGAVICG), and 381–401 (GKVIAVGGIVEIIAGIGILLF).

It belongs to the major facilitator superfamily.

It is found in the cell membrane. This is an uncharacterized protein from Bacillus subtilis (strain 168).